The primary structure comprises 374 residues: MRSASIILDSKALTHNLNCVIDTVPDTTKVLAMVKADAYGHGIAHCLPALKDADGLGVACFTEAQHIRELGWDKILVLIEGVFSETEWQQSIEAQCQSIIHHQDQVQWALNHLPPENSPCRTVWLKLNTGMNRLGFESDELGDVAQSLVDAGYELILTSHFANADAPNHPSNAKQIDTFTQALQQLREQVDPSIKASLCNSAGILNFKACHFDWVRPGIMLYGSSPVEGVSAQMLKLKPVMSFKASLMAIHNIAAGTSVGYGSRFVANRPIVKGIVSIGYGDGYPRVVDGSAWVSVQLAGEHSSYKCPVIGRVAMDMIAIDLTDVPNPKVGSQVMLWGDPELGAPSVDEIAESAHTLGYELLCRVTQRPLREVL.

Lys-35 serves as the catalytic Proton acceptor; specific for D-alanine. Residue Lys-35 is modified to N6-(pyridoxal phosphate)lysine. A substrate-binding site is contributed by Arg-133. Tyr-261 acts as the Proton acceptor; specific for L-alanine in catalysis. Position 315 (Met-315) interacts with substrate.

Belongs to the alanine racemase family. Pyridoxal 5'-phosphate serves as cofactor.

The enzyme catalyses L-alanine = D-alanine. It functions in the pathway amino-acid biosynthesis; D-alanine biosynthesis; D-alanine from L-alanine: step 1/1. In terms of biological role, catalyzes the interconversion of L-alanine and D-alanine. May also act on other amino acids. The sequence is that of Alanine racemase (alr) from Psychrobacter sp. (strain PRwf-1).